We begin with the raw amino-acid sequence, 345 residues long: L-erythro-3,5-diaminohexanoate dehydrogenase (345 aa).

It belongs to the KDD family. In terms of assembly, homodimer.

The enzyme catalyses (3S,5S)-3,5-diaminohexanoate + NAD(+) + H2O = (5S)-5-amino-3-oxohexanoate + NH4(+) + NADH + H(+). Its pathway is amino-acid degradation; L-lysine degradation via acetate pathway. Involved in the anaerobic fermentation of lysine. Catalyzes the oxidative deamination of L-erythro-3,5-diaminohexanoate (3,5-DAH) to 3-keto-5-aminohexanoate (KAH). It can use NAD or NADP. The protein is L-erythro-3,5-diaminohexanoate dehydrogenase of Fusobacterium nucleatum subsp. nucleatum (strain ATCC 25586 / DSM 15643 / BCRC 10681 / CIP 101130 / JCM 8532 / KCTC 2640 / LMG 13131 / VPI 4355).